We begin with the raw amino-acid sequence, 299 residues long: tRNA dimethylallyltransferase (299 aa).

Residue 22 to 29 (GPTASGKT) coordinates ATP. Residue 24-29 (TASGKT) participates in substrate binding. 2 interaction with substrate tRNA regions span residues 47 to 50 (DSRQ) and 172 to 176 (QRLLR).

The protein belongs to the IPP transferase family. As to quaternary structure, monomer. The cofactor is Mg(2+).

It carries out the reaction adenosine(37) in tRNA + dimethylallyl diphosphate = N(6)-dimethylallyladenosine(37) in tRNA + diphosphate. Catalyzes the transfer of a dimethylallyl group onto the adenine at position 37 in tRNAs that read codons beginning with uridine, leading to the formation of N6-(dimethylallyl)adenosine (i(6)A). This chain is tRNA dimethylallyltransferase, found in Endomicrobium trichonymphae.